The sequence spans 686 residues: MSFPRGSQTQKIKHPIGTRKGPLEVPPPTEKDWPKDDEQDHVLVDPDEELDSLPQPYRMINKLVNLLFDQSWEIIEERNALREAESSQIQPTVYPPLGEIQLNKMPNCMAVSQDYVFIGGAKGFSIYNLYSAKQIYAWEKLKVDVTSIWATDLGNEILIAPVDEMGIIRLFYFYKEGLYLVKAINEVDDTSKQTTCIKMEISQGGDFAAFLLQGAGDIWLDVYKLPKETWLKKLEHPQLTSNPKKKVRQPQLNSLGPISADPLEMDANVSFKGDIKLSLPVYIMKIKPPKPVTGTTFKSPLEVFAKIKDCYGLGSGQNHFIKDSQWEQQAEIFNASYKKYLDREWEEEPLSTATFYFLLPSCLFAMPPEVKGPSGMACVLGIHWTRSHNFFLYSLNRTLKDKADPEGVWPCAAPIAVSQLSCSSSYLVLACEDGVLTLWDLAKGFPLGVAALPQGCFCQSIHFLKYFSVHKGQNMYPEGQVKSQMKCVVLCTDASLHLVEASGTQGPTISVLVERPVKHLDKTICAVAPVPALPGMVLIFSKNGSVCLMDVAKREIICAFAPPGAFPLEVPWKPVFAVSPDHPCFLLRGDYSHETASTDDAGIQYSVFYFNFEACPLLENISKNCTIPQRDLDNMAFPQALPLEKRCERFLQKSYRKLEKNPEKEEEHWARLQRYSLSLQRENFKK.

The segment covering 1–10 (MSFPRGSQTQ) has biased composition (polar residues). Residues 1 to 40 (MSFPRGSQTQKIKHPIGTRKGPLEVPPPTEKDWPKDDEQD) form a disordered region. Positions 29–40 (TEKDWPKDDEQD) are enriched in basic and acidic residues. Residues 410–449 (PCAAPIAVSQLSCSSSYLVLACEDGVLTLWDLAKGFPLGV) form a WD repeat.

The sequence is that of WD repeat-containing protein 93 (WDR93) from Homo sapiens (Human).